The chain runs to 812 residues: Endogenous retrovirus group K member 18 Pol protein (812 aa).

The 189-residue stretch at 57-245 (LEKGHIEPSF…TPFHYLGMQI (189 aa)) folds into the Reverse transcriptase domain. The short motif at 161-164 (LPQG) is the LPQG element. A YXDD motif is present at residues 195-198 (YFDD). In terms of domain architecture, RNase H type-1 spans 460 to 590 (LENALTVFTD…ADLLVSSAFI (131 aa)). 4 residues coordinate Mg(2+): Asp469, Glu497, Asp517, and Asp582. The Integrase-type zinc-finger motif lies at 587–628 (SAFIKAQELHALTHVNAAGLKNKFDVTWKQAKDIVQHCTQCQ). Positions 596, 600, 624, and 627 each coordinate Zn(2+). An Integrase catalytic domain is found at 637-803 (AGVNPEVCVL…TSAEHLTGKK (167 aa)).

Belongs to the beta type-B retroviral polymerase family. HERV class-II K(HML-2) pol subfamily.

It catalyses the reaction DNA(n) + a 2'-deoxyribonucleoside 5'-triphosphate = DNA(n+1) + diphosphate. It carries out the reaction Endonucleolytic cleavage to 5'-phosphomonoester.. Its function is as follows. Early post-infection, the reverse transcriptase converts the viral RNA genome into double-stranded viral DNA. The RNase H domain of the reverse transcriptase performs two functions. It degrades the RNA template and specifically removes the RNA primer from the RNA/DNA hybrid. Following nuclear import, the integrase catalyzes the insertion of the linear, double-stranded viral DNA into the host cell chromosome. Endogenous Pol proteins may have kept, lost or modified their original function during evolution. The sequence is that of Endogenous retrovirus group K member 18 Pol protein (ERVK-18) from Homo sapiens (Human).